Consider the following 130-residue polypeptide: Large ribosomal subunit protein bL12 (130 aa).

The protein belongs to the bacterial ribosomal protein bL12 family. As to quaternary structure, homodimer. Part of the ribosomal stalk of the 50S ribosomal subunit. Forms a multimeric L10(L12)X complex, where L10 forms an elongated spine to which 2 to 4 L12 dimers bind in a sequential fashion. Binds GTP-bound translation factors.

Functionally, forms part of the ribosomal stalk which helps the ribosome interact with GTP-bound translation factors. Is thus essential for accurate translation. This Mycolicibacterium vanbaalenii (strain DSM 7251 / JCM 13017 / BCRC 16820 / KCTC 9966 / NRRL B-24157 / PYR-1) (Mycobacterium vanbaalenii) protein is Large ribosomal subunit protein bL12.